We begin with the raw amino-acid sequence, 277 residues long: Sulfur carrier protein FdhD (277 aa).

C121 functions as the Cysteine persulfide intermediate in the catalytic mechanism. Residue 260 to 265 (FCKPGR) participates in Mo-bis(molybdopterin guanine dinucleotide) binding.

Belongs to the FdhD family.

Its subcellular location is the cytoplasm. Functionally, required for formate dehydrogenase (FDH) activity. Acts as a sulfur carrier protein that transfers sulfur from IscS to the molybdenum cofactor prior to its insertion into FDH. This is Sulfur carrier protein FdhD from Shigella flexneri serotype 5b (strain 8401).